A 352-amino-acid chain; its full sequence is Ion-translocating oxidoreductase complex subunit D (352 aa).

Transmembrane regions (helical) follow at residues 20–40, 42–62, 78–109, 123–143, and 148–168; these read IMLL…RFFG, GTLV…ALVL, ALLT…VIIA, PAMI…TSWL, and IAVN…GHTA. At T187 the chain carries FMN phosphoryl threonine. The next 4 membrane-spanning stretches (helical) occupy residues 214 to 234, 242 to 262, 267 to 287, and 301 to 318; these read ILAG…GVWL, WHIP…GWLF, LAAP…FFIL, and LMFG…RSFG.

Belongs to the NqrB/RnfD family. The complex is composed of six subunits: RsxA, RsxB, RsxC, RsxD, RsxE and RsxG. The cofactor is FMN.

It is found in the cell inner membrane. Functionally, part of a membrane-bound complex that couples electron transfer with translocation of ions across the membrane. Required to maintain the reduced state of SoxR. The sequence is that of Ion-translocating oxidoreductase complex subunit D from Shigella flexneri.